A 358-amino-acid chain; its full sequence is Peptide chain release factor 1 (358 aa).

Q233 carries the post-translational modification N5-methylglutamine.

It belongs to the prokaryotic/mitochondrial release factor family. Post-translationally, methylated by PrmC. Methylation increases the termination efficiency of RF1.

The protein resides in the cytoplasm. In terms of biological role, peptide chain release factor 1 directs the termination of translation in response to the peptide chain termination codons UAG and UAA. The protein is Peptide chain release factor 1 of Blochmanniella floridana.